We begin with the raw amino-acid sequence, 203 residues long: MSEILELEAESRTEFGTGAARALRRAGRVPAIIYGAGKTPVSISLEEKEITKYYRKPAFISQLINLTIDKKKYKVLPKAVELHPVTDIVRHVDFVFLEEKTQKMEVPVVYEGKERALGVKRGGYFNIVKRRVTLLCDVNNIPRNVTIDVTNMPMATSLKSSKIELPKGCSFVTNKEFVLATIIGRRGAKTEAEGEQQAAEAGK.

This sequence belongs to the bacterial ribosomal protein bL25 family. CTC subfamily. In terms of assembly, part of the 50S ribosomal subunit; part of the 5S rRNA/L5/L18/L25 subcomplex. Contacts the 5S rRNA. Binds to the 5S rRNA independently of L5 and L18.

In terms of biological role, this is one of the proteins that binds to the 5S RNA in the ribosome where it forms part of the central protuberance. The polypeptide is Large ribosomal subunit protein bL25 (Rickettsia conorii (strain ATCC VR-613 / Malish 7)).